The chain runs to 199 residues: Probable GTP-binding protein EngB (199 aa).

Positions 25–199 (IGMEVAFVGY…LKRVLNNWLR (175 aa)) constitute an EngB-type G domain. 2 residues coordinate Mg(2+): Ser40 and Thr62.

The protein belongs to the TRAFAC class TrmE-Era-EngA-EngB-Septin-like GTPase superfamily. EngB GTPase family. It depends on Mg(2+) as a cofactor.

Necessary for normal cell division and for the maintenance of normal septation. The sequence is that of Probable GTP-binding protein EngB from Blochmanniella pennsylvanica (strain BPEN).